A 217-amino-acid polypeptide reads, in one-letter code: EF-hand domain-containing protein D2 homolog (217 aa).

Over residues methionine 1–serine 28 the composition is skewed to low complexity. The disordered stretch occupies residues methionine 1–glutamate 29. 2 EF-hand domains span residues asparagine 69–proline 104 and glutamine 105–glycine 140. Ca(2+) contacts are provided by aspartate 82, aspartate 86, glutamate 93, aspartate 118, aspartate 120, aspartate 122, lysine 124, and glutamate 129. Residues glutamate 191–glutamine 204 show a composition bias toward basic and acidic residues. The disordered stretch occupies residues glutamate 191–glutamine 217. Residues arginine 206–glutamine 217 show a composition bias toward low complexity.

In Drosophila melanogaster (Fruit fly), this protein is EF-hand domain-containing protein D2 homolog (Swip-1).